The chain runs to 122 residues: Large ribosomal subunit protein uL14 (122 aa).

It belongs to the universal ribosomal protein uL14 family. Part of the 50S ribosomal subunit. Forms a cluster with proteins L3 and L19. In the 70S ribosome, L14 and L19 interact and together make contacts with the 16S rRNA in bridges B5 and B8.

Its function is as follows. Binds to 23S rRNA. Forms part of two intersubunit bridges in the 70S ribosome. In Elusimicrobium minutum (strain Pei191), this protein is Large ribosomal subunit protein uL14.